The chain runs to 293 residues: Methylsterol monooxygenase 1 (293 aa).

The next 2 membrane-spanning stretches (helical) occupy residues 55–75 (LIVH…FQFI) and 100–120 (VLLF…YYFT). One can recognise a Fatty acid hydroxylase domain in the interval 145–274 (CAVIEDTWHY…FTWWDRIFGT (130 aa)). Residues 157–161 (HRLLH) carry the Histidine box-1 motif. The Histidine box-2 signature appears at 170–174 (HKVHH). A helical membrane pass occupies residues 199 to 219 (FFIGIVLLCDHVILLWAWVTI). The Histidine box-3 signature appears at 249 to 255 (HHDFHHM).

This sequence belongs to the sterol desaturase family. Fe cation serves as cofactor. Post-translationally, ubiquitinated by MARCHF6, leading to proteasomal degradation.

Its subcellular location is the endoplasmic reticulum membrane. The enzyme catalyses 4,4-dimethyl-5alpha-cholest-7-en-3beta-ol + 6 Fe(II)-[cytochrome b5] + 3 O2 + 5 H(+) = 4alpha-carboxy-4beta-methyl-5alpha-cholest-7-ene-3beta-ol + 6 Fe(III)-[cytochrome b5] + 4 H2O. It catalyses the reaction 4,4-dimethyl-5alpha-cholesta-8,24-dien-3beta-ol + 6 Fe(II)-[cytochrome b5] + 3 O2 + 5 H(+) = 4beta-methylzymosterol-4alpha-carboxylate + 6 Fe(III)-[cytochrome b5] + 4 H2O. The catalysed reaction is 4alpha-methylzymosterol + 6 Fe(II)-[cytochrome b5] + 3 O2 + 5 H(+) = 4alpha-carboxyzymosterol + 6 Fe(III)-[cytochrome b5] + 4 H2O. It carries out the reaction 4alpha-methyl-5alpha-cholest-7-en-3beta-ol + 6 Fe(II)-[cytochrome b5] + 3 O2 + 5 H(+) = 4alpha-carboxy-5alpha-cholest-7-en-3beta-ol + 6 Fe(III)-[cytochrome b5] + 4 H2O. The enzyme catalyses 4,4-dimethyl-5alpha-cholest-8-en-3beta-ol + 6 Fe(II)-[cytochrome b5] + 3 O2 + 5 H(+) = 4alpha-carboxy-4beta-methyl-5alpha-cholest-8-en-3beta-ol + 6 Fe(III)-[cytochrome b5] + 4 H2O. It catalyses the reaction 4alpha-methyl-5alpha-cholest-8-en-3beta-ol + 6 Fe(II)-[cytochrome b5] + 3 O2 + 5 H(+) = 4alpha-carboxy-5alpha-cholest-8-ene-3beta-ol + 6 Fe(III)-[cytochrome b5] + 4 H2O. It participates in steroid biosynthesis; zymosterol biosynthesis; zymosterol from lanosterol: step 3/6. Its pathway is steroid biosynthesis; cholesterol biosynthesis. Functionally, catalyzes the three-step monooxygenation required for the demethylation of 4,4-dimethyl and 4alpha-methylsterols, which can be subsequently metabolized to cholesterol. This is Methylsterol monooxygenase 1 (MSMO1) from Macaca fascicularis (Crab-eating macaque).